We begin with the raw amino-acid sequence, 245 residues long: Probable phosphatase YcdX (245 aa).

Zn(2+) is bound by residues H7, H9, H15, H40, E73, H101, H131, D192, and H194.

This sequence belongs to the PHP family. Homotrimer. It depends on Zn(2+) as a cofactor.

This is Probable phosphatase YcdX from Escherichia coli O139:H28 (strain E24377A / ETEC).